Reading from the N-terminus, the 216-residue chain is Urease accessory protein UreG (216 aa).

24-31 lines the GTP pocket; it reads GPVGSGKT.

Belongs to the SIMIBI class G3E GTPase family. UreG subfamily. Homodimer. UreD, UreF and UreG form a complex that acts as a GTP-hydrolysis-dependent molecular chaperone, activating the urease apoprotein by helping to assemble the nickel containing metallocenter of UreC. The UreE protein probably delivers the nickel.

The protein localises to the cytoplasm. Facilitates the functional incorporation of the urease nickel metallocenter. This process requires GTP hydrolysis, probably effectuated by UreG. The polypeptide is Urease accessory protein UreG (Variovorax paradoxus (strain S110)).